We begin with the raw amino-acid sequence, 122 residues long: Small ribosomal subunit protein uS13 (122 aa).

Positions 99–122 (RGQRTHTNARTRKGPAKAIAGKKK) are disordered.

This sequence belongs to the universal ribosomal protein uS13 family. Part of the 30S ribosomal subunit. Forms a loose heterodimer with protein S19. Forms two bridges to the 50S subunit in the 70S ribosome.

Functionally, located at the top of the head of the 30S subunit, it contacts several helices of the 16S rRNA. In the 70S ribosome it contacts the 23S rRNA (bridge B1a) and protein L5 of the 50S subunit (bridge B1b), connecting the 2 subunits; these bridges are implicated in subunit movement. Contacts the tRNAs in the A and P-sites. The protein is Small ribosomal subunit protein uS13 of Cereibacter sphaeroides (strain ATCC 17025 / ATH 2.4.3) (Rhodobacter sphaeroides).